The sequence spans 964 residues: Integrator complex subunit 4 (964 aa).

At Lys-27 the chain carries N6-acetyllysine. HEAT repeat units lie at residues 67-106, 146-184, 191-229, 230-264, 278-314, 370-406, 407-445, and 447-485; these read AESVEGVVRILLEHYYKENDPSVRLKIASLLGLLSKTAGF, QATQVRLVDVACKHLTDTSHGVRNKCLQLLGNLGSLEKS, GSAARDVQKIIGDHFSDQDPRVRTAAIKAMLQLHERGLK, LHQTIYNQACKLLSDDYEQVRSAAVQLIWVVSQLY, IRLVDDAFGKICHMVSDGSWVVRVQAAKLLGSMEQVS, NLIESGACGAFVHGLEDEMYEVRIAAVEALCMLAQSS, PSFAEKCLDFLVDMFNDEIEEVRLQSIHTMRKISNNITL, and EDQLDTVLAVLEDSSRDIREALHELLCCTNVSTKEGIHL. A Glycyl lysine isopeptide (Lys-Gly) (interchain with G-Cter in SUMO1); alternate cross-link involves residue Lys-792. Residue Lys-792 forms a Glycyl lysine isopeptide (Lys-Gly) (interchain with G-Cter in SUMO2); alternate linkage.

This sequence belongs to the Integrator subunit 4 family. Component of the Integrator complex, composed of core subunits INTS1, INTS2, INTS3, INTS4, INTS5, INTS6, INTS7, INTS8, INTS9/RC74, INTS10, INTS11/CPSF3L, INTS12, INTS13, INTS14 and INTS15. The core complex associates with protein phosphatase 2A subunits PPP2CA and PPP2R1A, to form the Integrator-PP2A (INTAC) complex. INTS4 is part of the RNA endonuclease subcomplex, composed of INTS4, INTS9, INTS11 and inositol hexakisphosphate (InsP6). Interacts with BRAT1; interaction is required for the assembly of the RNA endonuclease subcomplex.

The protein resides in the nucleus. It localises to the cytoplasm. Component of the integrator complex, a multiprotein complex that terminates RNA polymerase II (Pol II) transcription in the promoter-proximal region of genes. The integrator complex provides a quality checkpoint during transcription elongation by driving premature transcription termination of transcripts that are unfavorably configured for transcriptional elongation: the complex terminates transcription by (1) catalyzing dephosphorylation of the C-terminal domain (CTD) of Pol II subunit POLR2A/RPB1 and SUPT5H/SPT5, (2) degrading the exiting nascent RNA transcript via endonuclease activity and (3) promoting the release of Pol II from bound DNA. The integrator complex is also involved in terminating the synthesis of non-coding Pol II transcripts, such as enhancer RNAs (eRNAs), small nuclear RNAs (snRNAs), telomerase RNAs and long non-coding RNAs (lncRNAs). Within the integrator complex, INTS4 acts as an scaffold that links INTS9 and INTS11. Mediates recruitment of cytoplasmic dynein to the nuclear envelope, probably as component of the integrator complex. This Mus musculus (Mouse) protein is Integrator complex subunit 4 (Ints4).